The chain runs to 622 residues: Prothrombin (622 aa).

Residues 1–24 (MAHVRGLQLPGCLALAALCSLVHS) form the signal peptide. The propeptide occupies 25 to 43 (QHVFLAPQQARSLLQRVRR). Residues 44–89 (ANTFLEEVRKGNLERECVEETCSYEEAFEALESSTATDVFWAKYTA) form the Gla domain. A 4-carboxyglutamate mark is found at E49, E50, E57, E59, E62, E63, E68, E69, E72, and E75. Residues C60 and C65 are joined by a disulfide bond. Intrachain disulfides connect C90/C103, C108/C186, C129/C169, C157/C181, C213/C291, C234/C274, C262/C286, C336/C482, C391/C407, C536/C550, and C564/C594. 2 Kringle domains span residues 108-186 (CAEG…IPVC) and 213-291 (CVPD…LNYC). N121 and N143 each carry an N-linked (GlcNAc...) (complex) asparagine glycan. Residues 364 to 618 (IVEGSDAEIG…LKKWIQKVID (255 aa)) form the Peptidase S1 domain. Catalysis depends on H406, which acts as the Charge relay system. N-linked (GlcNAc...) (complex) asparagine glycosylation is present at N416. D462 (charge relay system) is an active-site residue. The segment at 551 to 573 (AGYKPDEGKRGDACEGDSGGPFV) is high affinity receptor-binding region which is also known as the TP508 peptide. The active-site Charge relay system is the S568.

Belongs to the peptidase S1 family. In terms of assembly, heterodimer (named alpha-thrombin) of a light and a heavy chain; disulfide-linked. Forms a heterodimer with SERPINA5. In plasma, interacts (via N-terminus) with alpha-1-microglobulin with molar ratio 1:2 and 1:1; this interaction does not prevent the activation of prothrombin to thrombin. Interacts (thrombin) with iripin-8, a serine protease inhibitor from Ixodes ricinus saliva. Interacts (thrombin) with iripin-3, a serine protease inhibitor from Ixodes ricinus saliva. Interacts (thrombin) with Anopheles albimanus salivary thrombin inhibitor anophelin; the interaction results in thrombin inhibition. Interacts (thrombin) with Anopheles gambiae salivary thrombin inhibitor anophelin; the interaction results in thrombin inhibition. Interacts (thrombin) with Amblyomma variegatum variegin; the interaction results in thrombin inhibition. Interacts (thrombin) with Xenopsylla cheopis salivary thrombin inhibitor XC-42. Interacts (thrombin) with Xenopsylla cheopis salivary thrombin inhibitor XC-43. In terms of processing, the gamma-carboxyglutamyl residues, which bind calcium ions, result from the carboxylation of glutamyl residues by a microsomal enzyme, the vitamin K-dependent carboxylase. The modified residues are necessary for the calcium-dependent interaction with a negatively charged phospholipid surface, which is essential for the conversion of prothrombin to thrombin. N-glycosylated. N-glycan heterogeneity at Asn-121: Hex3HexNAc3 (minor), Hex4HexNAc3 (minor) and Hex5HexNAc4 (major). At Asn-143: Hex4HexNAc3 (minor) and Hex5HexNAc4 (major). Post-translationally, in the penultimate step of the coagulation cascade, prothrombin is converted to thrombin by the prothrombinase complex composed of factor Xa (F10), cofactor Va (F5), and phospholipids. This activation requires factor Xa-catalyzed sequential cleavage at 2 sites, Arg-314 and Arg-363, along 2 possible pathways. In the first pathway, the first cleavage occurs at Arg-314, leading to the formation of the inactive intermediate prethrombin-2. This pathway preferentially occurs on platelets and in the absence of cofactor Va. In the second pathway, the first cleavage occurs at Arg-363, which separates protease domain into 2 chains that remain connected through a disulfide bond and generates the active intermediate meizothrombin. The presence of cofactor Va directs activation along the meizothrombin pathway and greatly accelerates the rate of cleavage at Arg-363, but has a smaller effect on the cleavage of meizothrombin at Arg-314. Meizothrombin accumulates as an intermediate when prothrombinase is assembled on the membrane of red blood cells. As to expression, expressed by the liver and secreted in plasma.

The protein localises to the secreted. Its subcellular location is the extracellular space. It carries out the reaction Selective cleavage of Arg-|-Gly bonds in fibrinogen to form fibrin and release fibrinopeptides A and B.. Its activity is regulated as follows. Activity is promoted in the presence of negatively charged surfaces, such as polyphosphate and dextran sulfate. Inhibited by SERPINA5. Thrombin, which cleaves bonds after Arg and Lys, converts fibrinogen to fibrin and activates factors V, VII, VIII, XIII, and, in complex with thrombomodulin, protein C. Functions in blood homeostasis, inflammation and wound healing. Activates coagulation factor XI (F11); activation is promoted by the contact with negatively charged surfaces. Triggers the production of pro-inflammatory cytokines, such as MCP-1/CCL2 and IL8/CXCL8, in endothelial cells. This chain is Prothrombin (F2), found in Homo sapiens (Human).